We begin with the raw amino-acid sequence, 276 residues long: Membrane protein insertase YidC 2 (276 aa).

The signal sequence occupies residues 1 to 22 (MGVKKKLKLTSLLGLSLLIMTA). Residue cysteine 23 is the site of N-palmitoyl cysteine attachment. Cysteine 23 carries the S-diacylglycerol cysteine lipid modification. The next 4 helical transmembrane spans lie at 58 to 78 (ISIG…LLPV), 130 to 150 (SDSL…FQAL), 169 to 189 (VDTT…STWL), and 207 to 227 (GIPV…ALYW).

This sequence belongs to the OXA1/ALB3/YidC family. Type 2 subfamily. As to quaternary structure, interacts with KhpB (also called EloR/Jag).

It is found in the cell membrane. Functionally, required for the insertion and/or proper folding and/or complex formation of integral membrane proteins into the membrane. Involved in integration of membrane proteins that insert both dependently and independently of the Sec translocase complex, as well as at least some lipoproteins. This chain is Membrane protein insertase YidC 2, found in Streptococcus pneumoniae (strain ATCC BAA-255 / R6).